Consider the following 396-residue polypeptide: Ribosomal RNA large subunit methyltransferase I (396 aa).

The 78-residue stretch at 2–79 (SIRIKLKPGR…KEEAIDRDFF (78 aa)) folds into the PUA domain.

This sequence belongs to the methyltransferase superfamily. RlmI family.

Its subcellular location is the cytoplasm. It carries out the reaction cytidine(1962) in 23S rRNA + S-adenosyl-L-methionine = 5-methylcytidine(1962) in 23S rRNA + S-adenosyl-L-homocysteine + H(+). Functionally, specifically methylates the cytosine at position 1962 (m5C1962) of 23S rRNA. This is Ribosomal RNA large subunit methyltransferase I from Shewanella amazonensis (strain ATCC BAA-1098 / SB2B).